Reading from the N-terminus, the 102-residue chain is Aspartyl/glutamyl-tRNA(Asn/Gln) amidotransferase subunit C (102 aa).

This sequence belongs to the GatC family. Heterotrimer of A, B and C subunits.

The catalysed reaction is L-glutamyl-tRNA(Gln) + L-glutamine + ATP + H2O = L-glutaminyl-tRNA(Gln) + L-glutamate + ADP + phosphate + H(+). It carries out the reaction L-aspartyl-tRNA(Asn) + L-glutamine + ATP + H2O = L-asparaginyl-tRNA(Asn) + L-glutamate + ADP + phosphate + 2 H(+). In terms of biological role, allows the formation of correctly charged Asn-tRNA(Asn) or Gln-tRNA(Gln) through the transamidation of misacylated Asp-tRNA(Asn) or Glu-tRNA(Gln) in organisms which lack either or both of asparaginyl-tRNA or glutaminyl-tRNA synthetases. The reaction takes place in the presence of glutamine and ATP through an activated phospho-Asp-tRNA(Asn) or phospho-Glu-tRNA(Gln). This chain is Aspartyl/glutamyl-tRNA(Asn/Gln) amidotransferase subunit C, found in Mycobacteroides abscessus (strain ATCC 19977 / DSM 44196 / CCUG 20993 / CIP 104536 / JCM 13569 / NCTC 13031 / TMC 1543 / L948) (Mycobacterium abscessus).